A 309-amino-acid chain; its full sequence is Homoserine O-succinyltransferase (309 aa).

Catalysis depends on Cys-142, which acts as the Acyl-thioester intermediate. Residues Lys-163 and Ser-192 each contribute to the substrate site. His-235 acts as the Proton acceptor in catalysis. The active site involves Glu-237. Arg-249 lines the substrate pocket.

Belongs to the MetA family.

It localises to the cytoplasm. It carries out the reaction L-homoserine + succinyl-CoA = O-succinyl-L-homoserine + CoA. It functions in the pathway amino-acid biosynthesis; L-methionine biosynthesis via de novo pathway; O-succinyl-L-homoserine from L-homoserine: step 1/1. Functionally, transfers a succinyl group from succinyl-CoA to L-homoserine, forming succinyl-L-homoserine. The protein is Homoserine O-succinyltransferase of Pectobacterium carotovorum subsp. carotovorum (strain PC1).